Here is a 1056-residue protein sequence, read N- to C-terminus: PH and SEC7 domain-containing protein 4 (1056 aa).

Positions 25–42 (LEPHPGECPRETCSHEDP) are enriched in basic and acidic residues. Disordered regions lie at residues 25–71 (LEPH…SGVE), 87–149 (CQEQ…QNRS), 195–239 (LPGD…QWGA), 340–362 (GAPAAPPGHGESEGDRLGPAPSA), 388–533 (VQPW…GDVQ), and 546–581 (LRTPMNSSWLPGSPMPQAQSPEEGQRPPAGDKLANG). Polar residues-rich tracts occupy residues 88-99 (QEQTRATDPPES) and 128-137 (NTASPGSPVN). Serine 131, serine 134, and serine 143 each carry phosphoserine. Acidic residues predominate over residues 207-220 (ENEDSGEDSSEPEG). Residue serine 413 is modified to Phosphoserine. The segment covering 414-423 (QDRDEREGGH) has biased composition (basic and acidic residues). Residues 438–456 (RSPASSPEPSSPESESRGP) show a composition bias toward low complexity. Phosphoserine is present on residues serine 448, serine 469, and serine 491. Composition is skewed to polar residues over residues 466–476 (QEGSPQLQHHS) and 486–502 (DASQSSLLETDGEQPSS). The segment covering 504 to 522 (KKKEAGEAPKPGEEVKSEG) has biased composition (basic and acidic residues). One can recognise an SEC7 domain in the interval 544-736 (ENLRTPMNSS…KALYWSIRSE (193 aa)). The span at 548 to 567 (TPMNSSWLPGSPMPQAQSPE) shows a compositional bias: polar residues. Residues 776 to 892 (PTYKQGILAR…WIARINLAAA (117 aa)) form the PH domain. A coiled-coil region spans residues 921–976 (SSLEEQHRSHENCLDAAADDLLDLQRNLPERRGRGRELEEHRLRKEYLEYEKTRYE). The disordered stretch occupies residues 1004–1056 (AGGTREPKLSLKKSHSSPSLHQDEAPTTAKVKRNISERRTYRKIIPKRNRNQL). 2 positions are modified to phosphoserine: serine 1019 and serine 1022. Residues 1043–1056 (TYRKIIPKRNRNQL) are compositionally biased toward basic residues.

As to expression, widely expressed. Highest levels of expression are found in placenta, pancreas, spleen, thymus and peripheral blood.

It is found in the cell membrane. Its subcellular location is the cell projection. It localises to the ruffle membrane. Guanine nucleotide exchange factor for ARF6 and ARL14/ARF7. Through ARL14 activation, controls the movement of MHC class II-containing vesicles along the actin cytoskeleton in dendritic cells. Involved in membrane recycling. Interacts with several phosphatidylinositol phosphate species, including phosphatidylinositol 3,4-bisphosphate, phosphatidylinositol 3,5-bisphosphate and phosphatidylinositol 4,5-bisphosphate. The protein is PH and SEC7 domain-containing protein 4 (PSD4) of Homo sapiens (Human).